The sequence spans 209 residues: Transmembrane 4 L6 family member 19 (209 aa).

Over 1–16 (MVSSPCTQASSRTCSR) the chain is Cytoplasmic. A helical transmembrane segment spans residues 17-37 (ILGLSLGTAALFAAGANVALL). The Extracellular segment spans residues 38–59 (LPNWDVTYLLRGLLGRHAMLGT). Residues 60 to 80 (GLWGGGLMVLTAAILISLMGW) traverse the membrane as a helical segment. Over 81–93 (RYGCFSKSGLCRS) the chain is Cytoplasmic. Residues 94–114 (VLTALLSGGLALLGALICFVT) form a helical membrane-spanning segment. Residues 115–175 (SGVALKDGPF…PSAAVVWHVS (61 aa)) lie on the Extracellular side of the membrane. An N-linked (GlcNAc...) asparagine glycan is attached at Asn133. The chain crosses the membrane as a helical span at residues 176–196 (LFSALLCISLLQLLLVVVHVI). Residues 186-196 (LQLLLVVVHVI) are important for homodimerization. The Cytoplasmic portion of the chain corresponds to 197–209 (NSLLGLFCSLCEK).

The protein belongs to the L6 tetraspanin family. As to quaternary structure, may form homodimers and homooligomers. Interacts with integrins ITGAV and ITGB3. Interacts with components of members of the V0 complex of vacuolar(H+)-ATPase (V-ATPase), including ATP6V0B and ATP6V0D2; this interaction inhibits V1-V0 complex assembly. As to expression, in adipose tissue, expressed by macrophages.

It is found in the lysosome membrane. The protein localises to the cytoplasm. The protein resides in the cytoskeleton. Its subcellular location is the cell projection. It localises to the filopodium. Negatively regulates vacuolar (H+)-ATPase (V-ATPase) activity by interacting with members of V-ATPase V0 complex and hence inhibiting V1-V0 complex assembly. Required for multinucleation during osteoclast differentiation. This Homo sapiens (Human) protein is Transmembrane 4 L6 family member 19 (TM4SF19).